A 419-amino-acid chain; its full sequence is 3-isopropylmalate dehydratase large subunit (419 aa).

Cys300, Cys360, and Cys363 together coordinate [4Fe-4S] cluster.

Belongs to the aconitase/IPM isomerase family. LeuC type 2 subfamily. In terms of assembly, heterodimer of LeuC and LeuD. Requires [4Fe-4S] cluster as cofactor.

It carries out the reaction (2R,3S)-3-isopropylmalate = (2S)-2-isopropylmalate. It participates in amino-acid biosynthesis; L-leucine biosynthesis; L-leucine from 3-methyl-2-oxobutanoate: step 2/4. Catalyzes the isomerization between 2-isopropylmalate and 3-isopropylmalate, via the formation of 2-isopropylmaleate. This chain is 3-isopropylmalate dehydratase large subunit, found in Nitratidesulfovibrio vulgaris (strain DP4) (Desulfovibrio vulgaris).